Consider the following 241-residue polypeptide: 2-C-methyl-D-erythritol 4-phosphate cytidylyltransferase (241 aa).

It belongs to the IspD/TarI cytidylyltransferase family. IspD subfamily.

It carries out the reaction 2-C-methyl-D-erythritol 4-phosphate + CTP + H(+) = 4-CDP-2-C-methyl-D-erythritol + diphosphate. It functions in the pathway isoprenoid biosynthesis; isopentenyl diphosphate biosynthesis via DXP pathway; isopentenyl diphosphate from 1-deoxy-D-xylulose 5-phosphate: step 2/6. In terms of biological role, catalyzes the formation of 4-diphosphocytidyl-2-C-methyl-D-erythritol from CTP and 2-C-methyl-D-erythritol 4-phosphate (MEP). In Pseudoalteromonas translucida (strain TAC 125), this protein is 2-C-methyl-D-erythritol 4-phosphate cytidylyltransferase.